A 121-amino-acid polypeptide reads, in one-letter code: MTRTVEKTNPRLTNLILLLKNTSRENEAKIWREIAGRLETPNRNYAEVNLSKINRYAQKGETIIVPGKVLGSGVLDQSVRIAALNFSESATSKIRDAKGQCMTIEQLLKDNPKGSGVRILR.

It belongs to the eukaryotic ribosomal protein eL18 family.

The chain is Large ribosomal subunit protein eL18 from Methanoregula boonei (strain DSM 21154 / JCM 14090 / 6A8).